The sequence spans 131 residues: Small ribosomal subunit protein uS8 (131 aa).

It belongs to the universal ribosomal protein uS8 family. In terms of assembly, part of the 30S ribosomal subunit. Contacts proteins S5 and S12.

In terms of biological role, one of the primary rRNA binding proteins, it binds directly to 16S rRNA central domain where it helps coordinate assembly of the platform of the 30S subunit. The sequence is that of Small ribosomal subunit protein uS8 from Azobacteroides pseudotrichonymphae genomovar. CFP2.